A 432-amino-acid polypeptide reads, in one-letter code: Ciliated left-right organizer protein containing ZP-N domains homolog (432 aa).

In terms of tissue distribution, expressed specifically by cells of the ciliated left-right organizer.

This is Ciliated left-right organizer protein containing ZP-N domains homolog (ciroz) from Danio rerio (Zebrafish).